We begin with the raw amino-acid sequence, 420 residues long: Protein disulfide isomerase Creld1 (420 aa).

The first 29 residues, 1–29 (MAPLPPRGLVPSLLWCLSLFLSLPGPVWL), serve as a signal peptide directing secretion. The Extracellular portion of the chain corresponds to 30–362 (QPSPPPHPSP…GFFAEMTEDE (333 aa)). The CXXC signature appears at 46–49 (CHTC). Disulfide bonds link C46-C49, C155-C169, C163-C181, and C183-C192. One can recognise an EGF-like 1 domain in the interval 153–193 (LPCPGGTERPCGGYGQCEGEGTRGGSGHCDCQAGYGGEACG). N-linked (GlcNAc...) asparagine glycosylation is present at N205. FU repeat units lie at residues 208–255 (HLVC…EQAT) and 268–315 (SYEC…VVCP). A CXXC motif is present at residues 278–281 (CLGC). Disulfide bonds link C278/C281, C309/C321, C314/C330, and C332/C343. The EGF-like 2; calcium-binding domain maps to 305–342 (DVDECETVVCPGENEKCENTEGGYRCVCAEGYRQEDGI). A helical membrane pass occupies residues 363 to 383 (MVVLQQMFFGVIICALATLAA). A topological domain (cytoplasmic) is located at residue K384. Residues 385 to 405 (GDLVFTAIFIGAVAAMTGYWL) form a helical membrane-spanning segment. Residues 406-420 (SERSDRVLEGFIKGR) lie on the Extracellular side of the membrane.

It belongs to the CRELD family. As to expression, expressed in myoblast C2C12 cells (at protein level).

Its subcellular location is the membrane. It carries out the reaction Catalyzes the rearrangement of -S-S- bonds in proteins.. Its function is as follows. Protein disulfide isomerase. Promotes the localization of acetylcholine receptors (AChRs) to the plasma membrane. This chain is Protein disulfide isomerase Creld1 (Creld1), found in Mus musculus (Mouse).